The chain runs to 318 residues: Acetyl-coenzyme A carboxylase carboxyl transferase subunit alpha (318 aa).

The 255-residue stretch at Lys38–Ala292 folds into the CoA carboxyltransferase C-terminal domain.

It belongs to the AccA family. Acetyl-CoA carboxylase is a heterohexamer composed of biotin carboxyl carrier protein (AccB), biotin carboxylase (AccC) and two subunits each of ACCase subunit alpha (AccA) and ACCase subunit beta (AccD).

The protein localises to the cytoplasm. The enzyme catalyses N(6)-carboxybiotinyl-L-lysyl-[protein] + acetyl-CoA = N(6)-biotinyl-L-lysyl-[protein] + malonyl-CoA. Its pathway is lipid metabolism; malonyl-CoA biosynthesis; malonyl-CoA from acetyl-CoA: step 1/1. Its function is as follows. Component of the acetyl coenzyme A carboxylase (ACC) complex. First, biotin carboxylase catalyzes the carboxylation of biotin on its carrier protein (BCCP) and then the CO(2) group is transferred by the carboxyltransferase to acetyl-CoA to form malonyl-CoA. This is Acetyl-coenzyme A carboxylase carboxyl transferase subunit alpha from Listeria monocytogenes serotype 4b (strain CLIP80459).